We begin with the raw amino-acid sequence, 222 residues long: MHESRLASARLYLCTDARRERGDLAQFAEAALAGGVDIIQLRDKGSPGELRFGPLQARDELAACEILADAAHRYGALFAVNDRADIARAAGADVLHLGQRDLPVNVARQILAPDTLIGRSTHDPDQVAAAAAGDADYFCVGPCWPTPTKPGRAAPGLGLVRVAAELGGDDKPWFAIGGINAQRLPAVLDAGARRIVVVRAITSADDPRAAAEQLRSALTAAN.

4-amino-2-methyl-5-(diphosphooxymethyl)pyrimidine contacts are provided by residues Q40–K44 and N81. D82 and D101 together coordinate Mg(2+). S120 is a binding site for 4-amino-2-methyl-5-(diphosphooxymethyl)pyrimidine. T146–T148 provides a ligand contact to 2-[(2R,5Z)-2-carboxy-4-methylthiazol-5(2H)-ylidene]ethyl phosphate. K149 is a 4-amino-2-methyl-5-(diphosphooxymethyl)pyrimidine binding site. 2-[(2R,5Z)-2-carboxy-4-methylthiazol-5(2H)-ylidene]ethyl phosphate is bound at residue G178.

The protein belongs to the thiamine-phosphate synthase family. Requires Mg(2+) as cofactor.

The enzyme catalyses 2-[(2R,5Z)-2-carboxy-4-methylthiazol-5(2H)-ylidene]ethyl phosphate + 4-amino-2-methyl-5-(diphosphooxymethyl)pyrimidine + 2 H(+) = thiamine phosphate + CO2 + diphosphate. The catalysed reaction is 2-(2-carboxy-4-methylthiazol-5-yl)ethyl phosphate + 4-amino-2-methyl-5-(diphosphooxymethyl)pyrimidine + 2 H(+) = thiamine phosphate + CO2 + diphosphate. It catalyses the reaction 4-methyl-5-(2-phosphooxyethyl)-thiazole + 4-amino-2-methyl-5-(diphosphooxymethyl)pyrimidine + H(+) = thiamine phosphate + diphosphate. It functions in the pathway cofactor biosynthesis; thiamine diphosphate biosynthesis; thiamine phosphate from 4-amino-2-methyl-5-diphosphomethylpyrimidine and 4-methyl-5-(2-phosphoethyl)-thiazole: step 1/1. Its function is as follows. Condenses 4-methyl-5-(beta-hydroxyethyl)thiazole monophosphate (THZ-P) and 2-methyl-4-amino-5-hydroxymethyl pyrimidine pyrophosphate (HMP-PP) to form thiamine monophosphate (TMP). The polypeptide is Thiamine-phosphate synthase (Mycobacterium tuberculosis (strain ATCC 25177 / H37Ra)).